A 180-amino-acid chain; its full sequence is Large ribosomal subunit protein uL5 (180 aa).

The protein belongs to the universal ribosomal protein uL5 family. As to quaternary structure, part of the 50S ribosomal subunit; part of the 5S rRNA/L5/L18/L25 subcomplex. Contacts the 5S rRNA and the P site tRNA. Forms a bridge to the 30S subunit in the 70S ribosome.

Its function is as follows. This is one of the proteins that bind and probably mediate the attachment of the 5S RNA into the large ribosomal subunit, where it forms part of the central protuberance. In the 70S ribosome it contacts protein S13 of the 30S subunit (bridge B1b), connecting the 2 subunits; this bridge is implicated in subunit movement. Contacts the P site tRNA; the 5S rRNA and some of its associated proteins might help stabilize positioning of ribosome-bound tRNAs. The protein is Large ribosomal subunit protein uL5 of Limosilactobacillus reuteri (strain DSM 20016) (Lactobacillus reuteri).